The following is a 348-amino-acid chain: Small ribosomal subunit protein mS45 (348 aa).

The span at 37 to 57 shows a compositional bias: low complexity; it reads SCSSSSPQSSQPTTHQQQCSS. The segment at 37–63 is disordered; sequence SCSSSSPQSSQPTTHQQQCSSFSTTAP.

It belongs to the mitochondrion-specific ribosomal protein mS45 family. As to quaternary structure, component of the mitochondrial small ribosomal subunit (mt-SSU). Mature N.crassa 74S mitochondrial ribosomes consist of a small (37S) and a large (54S) subunit. The 37S small subunit contains a 16S ribosomal RNA (16S mt-rRNA) and 32 different proteins. The 54S large subunit contains a 23S rRNA (23S mt-rRNA) and 42 different proteins.

Its subcellular location is the mitochondrion. Its function is as follows. Component of the mitochondrial ribosome (mitoribosome), a dedicated translation machinery responsible for the synthesis of mitochondrial genome-encoded proteins, including at least some of the essential transmembrane subunits of the mitochondrial respiratory chain. The mitoribosomes are attached to the mitochondrial inner membrane and translation products are cotranslationally integrated into the membrane. The polypeptide is Small ribosomal subunit protein mS45 (mrps35) (Neurospora crassa (strain ATCC 24698 / 74-OR23-1A / CBS 708.71 / DSM 1257 / FGSC 987)).